We begin with the raw amino-acid sequence, 318 residues long: Homoserine kinase (318 aa).

An ATP-binding site is contributed by 97-107 (PIGSGLGSSAC).

The protein belongs to the GHMP kinase family. Homoserine kinase subfamily.

It is found in the cytoplasm. It carries out the reaction L-homoserine + ATP = O-phospho-L-homoserine + ADP + H(+). It participates in amino-acid biosynthesis; L-threonine biosynthesis; L-threonine from L-aspartate: step 4/5. Its function is as follows. Catalyzes the ATP-dependent phosphorylation of L-homoserine to L-homoserine phosphate. The chain is Homoserine kinase from Vibrio vulnificus (strain CMCP6).